Here is a 410-residue protein sequence, read N- to C-terminus: Dihydrolipoyllysine-residue succinyltransferase component of 2-oxoglutarate dehydrogenase complex (410 aa).

One can recognise a Lipoyl-binding domain in the interval I3–G81. K44 is modified (N6-lipoyllysine). One can recognise a Peripheral subunit-binding (PSBD) domain in the interval T112 to L150. Residues H381 and D385 contribute to the active site.

The protein belongs to the 2-oxoacid dehydrogenase family. In terms of assembly, forms a 24-polypeptide structural core with octahedral symmetry. Part of the 2-oxoglutarate dehydrogenase (OGDH) complex composed of E1 (2-oxoglutarate dehydrogenase), E2 (dihydrolipoamide succinyltransferase) and E3 (dihydrolipoamide dehydrogenase); the complex contains multiple copies of the three enzymatic components (E1, E2 and E3). Requires (R)-lipoate as cofactor.

The enzyme catalyses N(6)-[(R)-dihydrolipoyl]-L-lysyl-[protein] + succinyl-CoA = N(6)-[(R)-S(8)-succinyldihydrolipoyl]-L-lysyl-[protein] + CoA. Its pathway is amino-acid degradation; L-lysine degradation via saccharopine pathway; glutaryl-CoA from L-lysine: step 6/6. Functionally, E2 component of the 2-oxoglutarate dehydrogenase (OGDH) complex which catalyzes the second step in the conversion of 2-oxoglutarate to succinyl-CoA and CO(2). In Buchnera aphidicola subsp. Baizongia pistaciae (strain Bp), this protein is Dihydrolipoyllysine-residue succinyltransferase component of 2-oxoglutarate dehydrogenase complex (sucB).